A 154-amino-acid chain; its full sequence is Protein X (154 aa).

Residues 68 to 117 (PCALRFTSARRMETTVNAPQSLPTTLHKRTLGLSPRSTTWIEEYIKDCVF) form a mitochondrial targeting sequence region.

The protein belongs to the orthohepadnavirus protein X family. May form homodimer. May interact with host CEBPA, CFLAR, CREB1, DDB1, E4F1, HBXIP, HSPD1/HSP60, NFKBIA, POLR2E and SMAD4. Interacts with host SMC5-SMC6 complex and induces its degradation. Interacts with host TRPC4AP; leading to prevent ubiquitination of TRPC4AP. Interacts with host PLSCR1; this interaction promotes ubiquitination and degradation of HBx and impairs HBx-mediated cell proliferation. Post-translationally, a fraction may be phosphorylated in insect cells and HepG2 cells, a human hepatoblastoma cell line. Phosphorylated in vitro by host protein kinase C or mitogen-activated protein kinase. N-acetylated in insect cells.

It is found in the host cytoplasm. The protein resides in the host nucleus. It localises to the host mitochondrion. Its function is as follows. Multifunctional protein that plays a role in silencing host antiviral defenses and promoting viral transcription. Does not seem to be essential for HBV infection. May be directly involved in development of cirrhosis and liver cancer (hepatocellular carcinoma). Most of cytosolic activities involve modulation of cytosolic calcium. The effect on apoptosis is controversial depending on the cell types in which the studies have been conducted. May induce apoptosis by localizing in mitochondria and causing loss of mitochondrial membrane potential. May also modulate apoptosis by binding host CFLAR, a key regulator of the death-inducing signaling complex (DISC). Promotes viral transcription by using the host E3 ubiquitin ligase DDB1 to target the SMC5-SMC6 complex to proteasomal degradation. This host complex would otherwise bind to viral episomal DNA, and prevents its transcription. Moderately stimulates transcription of many different viral and cellular transcription elements. Promoters and enhancers stimulated by HBx contain DNA binding sites for NF-kappa-B, AP-1, AP-2, c-EBP, ATF/CREB, or the calcium-activated factor NF-AT. This Hepatitis B virus genotype H subtype adw4 (isolate Nicaragua/2928Nic/1997) (HBV-H) protein is Protein X.